A 427-amino-acid chain; its full sequence is Inward rectifier potassium channel 2 (427 aa).

At 1-81 (MGSVRTNRYS…IFTTCVDIRW (81 aa)) the chain is on the cytoplasmic side. Cysteine 76 bears the S-nitrosocysteine mark. Residues 82 to 106 (RWMLVIFCLAFVLSWLFFGCVFWLI) form a helical membrane-spanning segment. Topologically, residues 107–128 (ALLHGDLDASKESKACVSEVNS) are extracellular. Positions 129 to 140 (FTAAFLFSIETQ) form an intramembrane region, helical; Pore-forming. The segment at residues 141–147 (TTIGYGF) is an intramembrane region (pore-forming). The short motif at 142-147 (TIGYGF) is the Selectivity filter element. Residues 148–156 (RCVTDECPV) are Extracellular-facing. A helical transmembrane segment spans residues 157 to 178 (AVFMVVFQSIVGCIIDAFIIGA). Residues 179-427 (VMAKMAKPKK…PRPLRRESEI (249 aa)) are Cytoplasmic-facing. The interval 181-208 (AKMAKPKKRNETLVFSHNAVIAMRDGKL) is polyphosphoinositide (PIP2)-binding. The disordered stretch occupies residues 384–427 (SKEEDDSENGVPESTSTDTPPDLDLHNQASVPLEPRPLRRESEI). The PDZ-binding motif lies at 425 to 427 (SEI).

It belongs to the inward rectifier-type potassium channel (TC 1.A.2.1) family. KCNJ2 subfamily. Homotetramer. Homomultimeric and heteromultimeric association with KCNJ4/Kir2.3. Can form heteromeric channels with Kir2.6/KCNJ18. Associates, via its PDZ-recognition domain, with a complex containing LIN7A, LIN7B, LIN7C, DLG1, CASK and APBA1. Post-translationally, S-nitrosylation increases the open probability and inward rectifying currents.

Its subcellular location is the cell membrane. The protein localises to the sarcolemma. It localises to the T-tubule. It catalyses the reaction K(+)(in) = K(+)(out). Its activity is regulated as follows. Activated by phosphatidylinositol 4,5 biphosphate (PtdIns(4,5)P2). Functionally, inward rectifier potassium channels are characterized by a greater tendency to allow potassium to flow into the cell rather than out of it. Their voltage dependence is regulated by the concentration of extracellular potassium; as external potassium is raised, the voltage range of the channel opening shifts to more positive voltages. The inward rectification is mainly due to the blockage of outward current by internal magnesium. Blocked by external barium or cesium. Probably participates in establishing action potential waveform and excitability of neuronal and muscle tissues. The polypeptide is Inward rectifier potassium channel 2 (KCNJ2) (Canis lupus familiaris (Dog)).